Reading from the N-terminus, the 590-residue chain is Aspartate--tRNA(Asp/Asn) ligase (590 aa).

Glu-172 is a binding site for L-aspartate. Positions Gln-196–Lys-199 are aspartate. Arg-218 contacts L-aspartate. ATP contacts are provided by residues Arg-218–Glu-220 and Gln-227. Residue His-449 participates in L-aspartate binding. Glu-484 is an ATP binding site. Arg-491 contacts L-aspartate. Gly-536 to Arg-539 lines the ATP pocket.

The protein belongs to the class-II aminoacyl-tRNA synthetase family. Type 1 subfamily. In terms of assembly, homodimer.

It is found in the cytoplasm. The enzyme catalyses tRNA(Asx) + L-aspartate + ATP = L-aspartyl-tRNA(Asx) + AMP + diphosphate. In terms of biological role, aspartyl-tRNA synthetase with relaxed tRNA specificity since it is able to aspartylate not only its cognate tRNA(Asp) but also tRNA(Asn). Reaction proceeds in two steps: L-aspartate is first activated by ATP to form Asp-AMP and then transferred to the acceptor end of tRNA(Asp/Asn). In Francisella tularensis subsp. tularensis (strain WY96-3418), this protein is Aspartate--tRNA(Asp/Asn) ligase.